We begin with the raw amino-acid sequence, 392 residues long: Glyceraldehyde-3-phosphate dehydrogenase A, chloroplastic (392 aa).

The N-terminal 56 residues, 1–56, are a transit peptide targeting the chloroplast; it reads NSSLQVSNKGFSEFSGLRTSSAIPFGRKTNDDLLSVVAFQTSVIGGGNSKRGVVEA. NADP(+) contacts are provided by residues 67-68, Asp91, and Arg136; that span reads RI. Residues 208–210, Thr239, Arg254, 267–268, and Arg290 each bind D-glyceraldehyde 3-phosphate; these read SCT and TG. Cys209 serves as the catalytic Nucleophile. Position 372 (Asn372) interacts with NADP(+).

Belongs to the glyceraldehyde-3-phosphate dehydrogenase family. Tetramer of either four A chains (GAPDH 2) or two A and two B chains (GAPDH 1).

The protein resides in the plastid. The protein localises to the chloroplast. It carries out the reaction D-glyceraldehyde 3-phosphate + phosphate + NADP(+) = (2R)-3-phospho-glyceroyl phosphate + NADPH + H(+). It participates in carbohydrate biosynthesis; Calvin cycle. The sequence is that of Glyceraldehyde-3-phosphate dehydrogenase A, chloroplastic (GAPA) from Nicotiana tabacum (Common tobacco).